The primary structure comprises 329 residues: Calponin-3 (329 aa).

K23 carries the post-translational modification N6-acetyllysine. The 105-residue stretch at H26 to K130 folds into the Calponin-homology (CH) domain. K158 bears the N6-methyllysine mark. Calponin-like repeat units follow at residues I164–Y189, I204–Y229, and I243–Y268. Residues P279–Y329 are disordered. Residues D306 to R318 are compositionally biased toward basic and acidic residues. S323 carries the phosphoserine modification.

It belongs to the calponin family. As to expression, expressed in both non-smooth muscle tissues as well as smooth muscle tissues.

In terms of biological role, thin filament-associated protein that is implicated in the regulation and modulation of smooth muscle contraction. It is capable of binding to actin, calmodulin and tropomyosin. The interaction of calponin with actin inhibits the actomyosin Mg-ATPase activity. In Homo sapiens (Human), this protein is Calponin-3 (CNN3).